A 158-amino-acid chain; its full sequence is Cytochrome c-type biogenesis protein CcmE (158 aa).

Topologically, residues 1-8 (MMRHRNRR) are cytoplasmic. Residues 9-29 (LATIAASAIVLVVAVGLGLMA) traverse the membrane as a helical; Signal-anchor for type II membrane protein segment. Topologically, residues 30 to 158 (LRSAVVFFYS…PSAAGDGDSR (129 aa)) are periplasmic. His123 and Tyr127 together coordinate heme. Positions 139-158 (AGVWQGEGETPSAAGDGDSR) are disordered.

Belongs to the CcmE/CycJ family.

It is found in the cell inner membrane. Functionally, heme chaperone required for the biogenesis of c-type cytochromes. Transiently binds heme delivered by CcmC and transfers the heme to apo-cytochromes in a process facilitated by CcmF and CcmH. This is Cytochrome c-type biogenesis protein CcmE from Maricaulis maris (strain MCS10) (Caulobacter maris).